A 590-amino-acid chain; its full sequence is Aspartate--tRNA(Asp/Asn) ligase (590 aa).

E170 lines the L-aspartate pocket. The interval 194 to 197 (QLFK) is aspartate. R216 contacts L-aspartate. Residues 216–218 (RDE) and Q225 each bind ATP. H448 contributes to the L-aspartate binding site. E482 provides a ligand contact to ATP. Position 489 (R489) interacts with L-aspartate. 534–537 (GWDR) is an ATP binding site. Residues 559 to 590 (GGVDPLTEAPAPITAQQRKESGIDAKPGKDGA) form a disordered region. The segment covering 575 to 590 (QRKESGIDAKPGKDGA) has biased composition (basic and acidic residues).

This sequence belongs to the class-II aminoacyl-tRNA synthetase family. Type 1 subfamily. Homodimer.

It localises to the cytoplasm. It carries out the reaction tRNA(Asx) + L-aspartate + ATP = L-aspartyl-tRNA(Asx) + AMP + diphosphate. In terms of biological role, aspartyl-tRNA synthetase with relaxed tRNA specificity since it is able to aspartylate not only its cognate tRNA(Asp) but also tRNA(Asn). Reaction proceeds in two steps: L-aspartate is first activated by ATP to form Asp-AMP and then transferred to the acceptor end of tRNA(Asp/Asn). This Mycolicibacterium gilvum (strain PYR-GCK) (Mycobacterium gilvum (strain PYR-GCK)) protein is Aspartate--tRNA(Asp/Asn) ligase.